The chain runs to 225 residues: Large ribosomal subunit protein uL1 (225 aa).

Belongs to the universal ribosomal protein uL1 family. As to quaternary structure, part of the 50S ribosomal subunit.

Binds directly to 23S rRNA. The L1 stalk is quite mobile in the ribosome, and is involved in E site tRNA release. Its function is as follows. Protein L1 is also a translational repressor protein, it controls the translation of the L11 operon by binding to its mRNA. The sequence is that of Large ribosomal subunit protein uL1 from Rhodopirellula baltica (strain DSM 10527 / NCIMB 13988 / SH1).